We begin with the raw amino-acid sequence, 325 residues long: Glycerol-3-phosphate dehydrogenase [NAD(P)+] (325 aa).

The NADPH site is built by serine 14, phenylalanine 15, arginine 35, and lysine 109. Residues lysine 109 and glycine 137 each coordinate sn-glycerol 3-phosphate. Alanine 141 provides a ligand contact to NADPH. Positions 192, 247, 257, 258, and 259 each coordinate sn-glycerol 3-phosphate. The active-site Proton acceptor is lysine 192. Arginine 258 is a binding site for NADPH. Residues leucine 282 and glutamate 284 each contribute to the NADPH site.

This sequence belongs to the NAD-dependent glycerol-3-phosphate dehydrogenase family.

The protein resides in the cytoplasm. It carries out the reaction sn-glycerol 3-phosphate + NAD(+) = dihydroxyacetone phosphate + NADH + H(+). The catalysed reaction is sn-glycerol 3-phosphate + NADP(+) = dihydroxyacetone phosphate + NADPH + H(+). The protein operates within membrane lipid metabolism; glycerophospholipid metabolism. In terms of biological role, catalyzes the reduction of the glycolytic intermediate dihydroxyacetone phosphate (DHAP) to sn-glycerol 3-phosphate (G3P), the key precursor for phospholipid synthesis. In Rickettsia africae (strain ESF-5), this protein is Glycerol-3-phosphate dehydrogenase [NAD(P)+].